We begin with the raw amino-acid sequence, 527 residues long: MLSLTRILRKKIPVHELAGKISRPPLRPFSVVVASDEKGGIGDGGTIPWEIPEDMQYFRRVTTNLRGKNVKPSPSKRNAVVMGRKTWDSLPPKFRPLSNRLNVVLSRSATKEQLLAGIPDPIKRAEAANDVVAVNGGLEDALRMLVSKEHTSSIETVFCIGGGTIYKQALCAPCVNVLQAIHRTVVRPASNSCSVFFDIPAAGTKTPEGLELVRESITDERVSTGAGGKKYQFEKLVPRNSEEEQYLNLVGRIIDEGCTKCDRTGVGTRSLFGAQMRFSLRNNRLPLLTTKRVFWRGVCEELLWFLRGETNAKLLSDKGIHIWDGNGSRAFLDSRGLTDYDEMDLGPVYGFQWRHFGADYISCKVDSEGKGVDQIANIVKSLIENPDDRRMICTAWNPAALPRMALPPCHMMAQFYVSNGELSCMLYQRSCDMGLGVPFNIASYALLTFLMAKASGLRPGELVHTLGDAHVYSNHVEPCRKQLKRVPRPFPFIVFKQDKEFLEDFQESDIEVIDYSPYPVISMEMAV.

The 211-residue stretch at 28–238 folds into the DHFR domain; sequence PFSVVVASDE…KKYQFEKLVP (211 aa). Residue Val32 participates in substrate binding. NADP(+) contacts are provided by residues Ala34 and 40–46; that span reads GIGDGGT. Asp54 is a substrate binding site. NADP(+) is bound by residues 84–86 and 105–108; these read RKT and LSRS. Substrate-binding residues include Ile160, Tyr166, and Thr184. An NADP(+)-binding site is contributed by 161–168; that stretch reads GGGTIYKQ. Positions 243–527 are thymidylate synthase; that stretch reads EEQYLNLVGR…YPVISMEMAV (285 aa). DUMP is bound at residue Arg263. Cys409 is an active-site residue. DUMP contacts are provided by residues His410, 428-432, Asn440, and 470-472; these read QRSCD and HVY.

This sequence in the N-terminal section; belongs to the dihydrofolate reductase family. The protein in the C-terminal section; belongs to the thymidylate synthase family. Homodimer.

It carries out the reaction dUMP + (6R)-5,10-methylene-5,6,7,8-tetrahydrofolate = 7,8-dihydrofolate + dTMP. It catalyses the reaction (6S)-5,6,7,8-tetrahydrofolate + NADP(+) = 7,8-dihydrofolate + NADPH + H(+). The protein operates within pyrimidine metabolism; dTTP biosynthesis. Its pathway is cofactor biosynthesis; tetrahydrofolate biosynthesis; 5,6,7,8-tetrahydrofolate from 7,8-dihydrofolate: step 1/1. In terms of biological role, bifunctional enzyme. Involved in de novo dTMP biosynthesis. Key enzyme in folate metabolism. Catalyzes an essential reaction for de novo glycine and purine synthesis, DNA precursor synthesis, and for the conversion of dUMP to dTMP. This Trypanosoma brucei brucei protein is Bifunctional dihydrofolate reductase-thymidylate synthase.